The sequence spans 157 residues: Arginine repressor (157 aa).

It belongs to the ArgR family.

The protein localises to the cytoplasm. It participates in amino-acid biosynthesis; L-arginine biosynthesis [regulation]. Its function is as follows. Regulates arginine biosynthesis genes. In Bacteroides fragilis (strain ATCC 25285 / DSM 2151 / CCUG 4856 / JCM 11019 / LMG 10263 / NCTC 9343 / Onslow / VPI 2553 / EN-2), this protein is Arginine repressor.